The chain runs to 351 residues: Heat shock factor protein HSF30 (351 aa).

Residues P29–N123 mediate DNA binding.

The protein belongs to the HSF family. As to quaternary structure, homotrimer. In terms of processing, exhibits temperature-dependent phosphorylation.

Its subcellular location is the nucleus. Its function is as follows. DNA-binding protein that specifically binds heat shock promoter elements (HSE) and activates transcription. The sequence is that of Heat shock factor protein HSF30 (HSF30) from Solanum peruvianum (Peruvian tomato).